Here is an 897-residue protein sequence, read N- to C-terminus: 3'-5' exonuclease DinG (897 aa).

Positions 8–161 (VVDLETTGNQ…DEDAATTAKL (154 aa)) constitute an Exonuclease domain. Residues 241-496 (SKAVDQLGLT…KAIDQLEKQR (256 aa)) enclose the Helicase ATP-binding domain. 276-283 (ASLGSGKS) contacts ATP. A DEAH box motif is present at residues 448–451 (DEAH). One can recognise a Helicase C-terminal domain in the interval 703 to 893 (NIDEYVASIV…QFGKLLRQIQ (191 aa)).

It belongs to the helicase family. DinG subfamily. Type 2 sub-subfamily.

In terms of biological role, 3'-5' exonuclease. The chain is 3'-5' exonuclease DinG from Staphylococcus aureus (strain USA300).